We begin with the raw amino-acid sequence, 75 residues long: UPF0352 protein ASA_2693 (75 aa).

This sequence belongs to the UPF0352 family.

This chain is UPF0352 protein ASA_2693, found in Aeromonas salmonicida (strain A449).